We begin with the raw amino-acid sequence, 113 residues long: MEIFELISENEKYFNGIPIILPKKKKTYVYKNITFIFYIPSDNKIEQYIQRSELHYSDFIVYGKVIIDDVEMLLLYVNFEYYGISIDGKTKYLGKSIKDLKIRGTKRWKDFTH.

It belongs to the poxviruses A31 family.

The sequence is that of Protein FPV195 from Vertebrata (FPV).